The primary structure comprises 396 residues: Gap junction gamma-1 protein (396 aa).

At 1 to 22 the chain is on the cytoplasmic side; that stretch reads MSWSFLTRLLEEIHNHSTFVGK. Residues 23-45 traverse the membrane as a helical segment; that stretch reads IWLTVLIVFRIVLTAVGGESIYY. Topologically, residues 46–75 are extracellular; sequence DEQSKFVCNTEQPGCENVCYDAFAPLSHVR. The helical transmembrane segment at 76–95 threads the bilayer; it reads FWVFQIILVATPSVMYLGYA. Over 96-175 the chain is Cytoplasmic; that stretch reads IHKIAKMEHG…RRIREDGLMK (80 aa). The tract at residues 145-165 is disordered; it reads ELESEKENKEQNQSKPKHDGR. Residues 147-156 are compositionally biased toward basic and acidic residues; it reads ESEKENKEQN. A helical membrane pass occupies residues 176–198; the sequence is IYVLQLLARTMFEVGFLIGQYFL. Topologically, residues 199–228 are extracellular; that stretch reads YGFQVHPFYVCSRVPCPHKIDCFISRPTEK. A helical transmembrane segment spans residues 229–248; it reads TIFLLIMYGVTGLCLLLNIW. The Cytoplasmic portion of the chain corresponds to 249–396; the sequence is EMLHLGFGTI…SGDGKTSVWI (148 aa). The segment at 357–396 is disordered; that stretch reads NHQNNPHGPREKKAKVGSKAGSNKSSASSKSGDGKTSVWI. The span at 373 to 396 shows a compositional bias: low complexity; sequence GSKAGSNKSSASSKSGDGKTSVWI.

Belongs to the connexin family. Gamma-type subfamily. In terms of assembly, a connexon is composed of a hexamer of connexins. Interacts with CNST.

Its subcellular location is the cell membrane. It localises to the cell junction. It is found in the gap junction. One gap junction consists of a cluster of closely packed pairs of transmembrane channels, the connexons, through which materials of low MW diffuse from one cell to a neighboring cell. This Sus scrofa (Pig) protein is Gap junction gamma-1 protein (GJC1).